A 314-amino-acid chain; its full sequence is MAATASAGAGGIDGKPRTSPKSVKFLFGGLAGMGATVFVQPLDLVKNRMQLSGEGAKTREYKTSFHALTSILKAEGLRGIYTGLSAGLLRQATYTTTRLGIYTVLFERLTGADGTPPGFLLKAVIGMTAGATGAFVGTPAEVALIRMTADGRLPADQRRGYKNVFNALIRITREEGVLTLWRGCIPTMARAVVVNAAQLASYSQSKQFLLDSGYFSDNILCHFCASMISGLVTTAASMPVDIAKTRIQNMRMIDGKPEYKNGLDVLFKVVRYEGFFSLWKGFTPYYARLGPHTVLTFIFLEQMNKAYKRLFLSG.

Position 2 is an N-acetylalanine (Ala2). Ser6 carries the post-translational modification Phosphoserine. 3 Solcar repeats span residues 23–108 (VKFL…LFER), 117–208 (PGFL…SKQF), and 217–306 (DNIL…MNKA). The helical transmembrane segment at 24 to 42 (KFLFGGLAGMGATVFVQPL) threads the bilayer. At Lys57 the chain carries N6-succinyllysine. Lys73 carries the N6-acetyllysine modification. A helical membrane pass occupies residues 83–101 (GLSAGLLRQATYTTTRLGI). Residue Tyr102 is modified to Phosphotyrosine. 3 helical membrane-spanning segments follow: residues 119-140 (FLLK…GTPA), 183-202 (GCIP…LASY), and 222-240 (HFCA…SMPV). Lys256 is subject to N6-acetyllysine. Residues 281–300 (GFTPYYARLGPHTVLTFIFL) form a helical membrane-spanning segment.

This sequence belongs to the mitochondrial carrier (TC 2.A.29) family. Interacts with SMIM26. In terms of tissue distribution, most highly expressed in the heart.

It localises to the mitochondrion inner membrane. The enzyme catalyses (S)-malate(in) + 2-oxoglutarate(out) = (S)-malate(out) + 2-oxoglutarate(in). It catalyses the reaction malonate(in) + 2-oxoglutarate(out) = malonate(out) + 2-oxoglutarate(in). It carries out the reaction succinate(in) + 2-oxoglutarate(out) = succinate(out) + 2-oxoglutarate(in). The catalysed reaction is maleate(in) + 2-oxoglutarate(out) = maleate(out) + 2-oxoglutarate(in). The enzyme catalyses oxaloacetate(in) + 2-oxoglutarate(out) = oxaloacetate(out) + 2-oxoglutarate(in). Its function is as follows. Catalyzes the transport of 2-oxoglutarate (alpha-oxoglutarate) across the inner mitochondrial membrane in an electroneutral exchange for malate. Can also exchange 2-oxoglutarate for other dicarboxylic acids such as malonate, succinate, maleate and oxaloacetate, although with lower affinity. Contributes to several metabolic processes, including the malate-aspartate shuttle, the oxoglutarate/isocitrate shuttle, in gluconeogenesis from lactate, and in nitrogen metabolism. Maintains mitochondrial fusion and fission events, and the organization and morphology of cristae. Involved in the regulation of apoptosis. Helps protect from cytotoxic-induced apoptosis by modulating glutathione levels in mitochondria. In Homo sapiens (Human), this protein is Mitochondrial 2-oxoglutarate/malate carrier protein (SLC25A11).